The following is a 275-amino-acid chain: Tryptase (275 aa).

Residues 1-20 form the signal peptide; it reads MLNLLVLALPLLVSLVHTAP. Residues 21–30 constitute a propeptide, activation peptide; the sequence is APGQALERAG. The Peptidase S1 domain maps to 31–272; the sequence is IVGGKEAPGH…YLDWIHQCIP (242 aa). A disulfide bond links Cys59 and Cys75. Residues His74 and Asp121 each act as charge relay system in the active site. A glycan (N-linked (GlcNAc...) asparagine) is linked at Asn132. Disulfide bonds link Cys155–Cys230, Cys188–Cys211, and Cys220–Cys248. The active-site Charge relay system is the Ser224. N-linked (GlcNAc...) asparagine glycosylation is present at Asn233.

Belongs to the peptidase S1 family. Tryptase subfamily. Homotetramer.

Its subcellular location is the secreted. It catalyses the reaction Preferential cleavage: Arg-|-Xaa, Lys-|-Xaa, but with more restricted specificity than trypsin.. Tryptase is the major neutral protease present in mast cells and is secreted upon the coupled activation-degranulation response of this cell type. The protein is Tryptase (MCT7) of Sus scrofa (Pig).